The following is a 597-amino-acid chain: Elongation factor 4 (597 aa).

Residues 2–184 (DHIRNFSIIA…ALVAKVPPPK (183 aa)) enclose the tr-type G domain. Residues 14 to 19 (DHGKST) and 131 to 134 (NKID) each bind GTP.

It belongs to the TRAFAC class translation factor GTPase superfamily. Classic translation factor GTPase family. LepA subfamily.

The protein localises to the cell inner membrane. The enzyme catalyses GTP + H2O = GDP + phosphate + H(+). Functionally, required for accurate and efficient protein synthesis under certain stress conditions. May act as a fidelity factor of the translation reaction, by catalyzing a one-codon backward translocation of tRNAs on improperly translocated ribosomes. Back-translocation proceeds from a post-translocation (POST) complex to a pre-translocation (PRE) complex, thus giving elongation factor G a second chance to translocate the tRNAs correctly. Binds to ribosomes in a GTP-dependent manner. The polypeptide is Elongation factor 4 (Paraburkholderia phytofirmans (strain DSM 17436 / LMG 22146 / PsJN) (Burkholderia phytofirmans)).